We begin with the raw amino-acid sequence, 436 residues long: 3-ketoacyl-CoA thiolase (436 aa).

C99 (acyl-thioester intermediate) is an active-site residue. Catalysis depends on proton acceptor residues H392 and C422.

This sequence belongs to the thiolase-like superfamily. Thiolase family. Heterotetramer of two alpha chains (FadJ) and two beta chains (FadI).

It is found in the cytoplasm. It catalyses the reaction an acyl-CoA + acetyl-CoA = a 3-oxoacyl-CoA + CoA. The protein operates within lipid metabolism; fatty acid beta-oxidation. Functionally, catalyzes the final step of fatty acid oxidation in which acetyl-CoA is released and the CoA ester of a fatty acid two carbons shorter is formed. This chain is 3-ketoacyl-CoA thiolase, found in Salmonella paratyphi A (strain AKU_12601).